Consider the following 220-residue polypeptide: Polyadenylate-binding protein 2 (220 aa).

Residues 1-24 are disordered; it reads MEEEEHEVYGGEIPDVGEMDGDME. The stretch at 34–74 forms a coiled coil; sequence AADDDAVKELDEMKKRLKEMEDEAAALREMQAKVEKEMGAQ. The tract at residues 78–219 is necessary for homooligomerization; that stretch reads SIAANQAGKE…FRRPMRYMPY (142 aa). The 77-residue stretch at 92–168 folds into the RRM domain; that stretch reads RSVFVGNVDY…RQLKVLQKRT (77 aa). The Nuclear localization signal signature appears at 165-172; the sequence is QKRTNVPG.

Monomer and homooligomer. Binds RNA as a monomer and oligomerizes when bound to poly(A). Forms a complex with cleavage and polyadenylation specificity factor (CPSF) subunits PAPS2, FIPS5, PABN3 and PABN1. Interacts with CSP3.

Its subcellular location is the nucleus speckle. The protein localises to the cytoplasm. Its function is as follows. Involved in the 3'-end formation of mRNA precursors (pre-mRNA) by the addition of a poly(A) tail of 200-250 nt to the upstream cleavage product. Stimulates poly(A) polymerase (PAPOLA) conferring processivity on the poly(A) tail elongation reaction and also controls the poly(A) tail length. Increases the affinity of poly(A) polymerase for RNA. Binds to poly(A) and to poly(G) with high affinity. May protect the poly(A) tail from degradation. The protein is Polyadenylate-binding protein 2 of Arabidopsis thaliana (Mouse-ear cress).